The chain runs to 237 residues: Uridylate kinase (237 aa).

12–15 (KLSG) contacts ATP. The tract at residues 20 to 25 (GEDGLG) is involved in allosteric activation by GTP. UMP is bound at residue Gly-54. ATP contacts are provided by Gly-55 and Arg-59. UMP contacts are provided by residues Asp-74 and 135-142 (TGNPFFTT). The ATP site is built by Thr-162, Tyr-168, and Asp-171.

Belongs to the UMP kinase family. In terms of assembly, homohexamer.

Its subcellular location is the cytoplasm. The enzyme catalyses UMP + ATP = UDP + ADP. The protein operates within pyrimidine metabolism; CTP biosynthesis via de novo pathway; UDP from UMP (UMPK route): step 1/1. Its activity is regulated as follows. Allosterically activated by GTP. Inhibited by UTP. Functionally, catalyzes the reversible phosphorylation of UMP to UDP. This chain is Uridylate kinase, found in Haemophilus influenzae (strain PittGG).